Reading from the N-terminus, the 87-residue chain is Small ribosomal subunit protein bS20 (87 aa).

Positions 1 to 27 are disordered; that stretch reads MANSVQATKRARQAEKHRQHNAGMRAA. The segment covering 9–20 has biased composition (basic residues); the sequence is KRARQAEKHRQH.

Belongs to the bacterial ribosomal protein bS20 family.

Functionally, binds directly to 16S ribosomal RNA. The chain is Small ribosomal subunit protein bS20 from Hydrogenovibrio crunogenus (strain DSM 25203 / XCL-2) (Thiomicrospira crunogena).